A 281-amino-acid chain; its full sequence is Nucleoid occlusion protein (281 aa).

The interval 1 to 24 (MKHPFSRLFSFGEKEQEEMEEKQE) is disordered. A DNA-binding region (H-T-H motif) is located at residues 145–164 (EALAQRLGKGQSTIANKLRL).

Belongs to the ParB family.

It is found in the cytoplasm. Its subcellular location is the nucleoid. Its function is as follows. Effects nucleoid occlusion by binding relatively nonspecifically to DNA and preventing the assembly of the division machinery in the vicinity of the nucleoid, especially under conditions that disturb the cell cycle. It helps to coordinate cell division and chromosome segregation by preventing the formation of the Z ring through the nucleoid, which would cause chromosome breakage. This chain is Nucleoid occlusion protein, found in Geobacillus kaustophilus (strain HTA426).